We begin with the raw amino-acid sequence, 98 residues long: HIG1 domain family member 1B (98 aa).

Residues 1–28 (MSANKGWWVPPEGEDNLSKKFLRKTRES) are Cytoplasmic-facing. The HIG1 domain maps to 1-94 (MSANKGWWVP…YRDYIKRVSE (94 aa)). A helical transmembrane segment spans residues 29–46 (PLVPIGVAGCLVIAAYRI). Residues 47 to 60 (YRLKARGSTKLSIH) lie on the Extracellular side of the membrane. Residues 61–83 (LIHTRVAAQACAVGAIMLGAMYT) traverse the membrane as a helical segment. The Cytoplasmic portion of the chain corresponds to 84–98 (MYRDYIKRVSEDAEK).

It is found in the membrane. This Mus musculus (Mouse) protein is HIG1 domain family member 1B (Higd1b).